Here is a 70-residue protein sequence, read N- to C-terminus: Large ribosomal subunit protein bL31 (70 aa).

Residues C16, C18, C36, and C39 each contribute to the Zn(2+) site.

It belongs to the bacterial ribosomal protein bL31 family. Type A subfamily. As to quaternary structure, part of the 50S ribosomal subunit. The cofactor is Zn(2+).

Binds the 23S rRNA. The polypeptide is Large ribosomal subunit protein bL31 (Fervidobacterium nodosum (strain ATCC 35602 / DSM 5306 / Rt17-B1)).